The sequence spans 458 residues: Gamma aminobutyrate transaminase 2 (458 aa).

Residue 114–115 participates in pyridoxal 5'-phosphate binding; that stretch reads GS. A substrate-binding site is contributed by tyrosine 147. Aspartate 254 serves as a coordination point for pyridoxal 5'-phosphate. Lysine 283 lines the substrate pocket. Position 283 is an N6-(pyridoxal phosphate)lysine (lysine 283).

The protein belongs to the class-III pyridoxal-phosphate-dependent aminotransferase family. As to expression, expressed in leaves, roots, stems, flowers and fruits. Expressed in carpels, but not in stamens.

The protein resides in the cytoplasm. It carries out the reaction 4-aminobutanoate + pyruvate = succinate semialdehyde + L-alanine. The catalysed reaction is 4-aminobutanoate + glyoxylate = succinate semialdehyde + glycine. Functionally, transaminase that degrades gamma-amino butyric acid (GABA) and uses pyruvate or glyoxylate as amino-group acceptor. Cannot use beta-alanine, ornithine, acetylornithine, serine, glycine, asparagine, glutamine, glutamate, valine, leucine, isoleucine, methionine, phenylalanine, histidine, lysine, arginine, aspartate, threonine, tyrosine, tryptophan, proline, or cysteine as amino donors. May be responsible for establishing the GABA gradient in the carpel. The protein is Gamma aminobutyrate transaminase 2 (GABA-TP2) of Solanum lycopersicum (Tomato).